The following is a 270-amino-acid chain: NAD kinase (270 aa).

Residue aspartate 49 is the Proton acceptor of the active site. NAD(+) contacts are provided by residues 49 to 50 (DG), arginine 54, 126 to 127 (NE), arginine 152, aspartate 154, 165 to 170 (TAYNKS), alanine 189, and glutamine 227.

The protein belongs to the NAD kinase family. Requires a divalent metal cation as cofactor.

The protein localises to the cytoplasm. It carries out the reaction NAD(+) + ATP = ADP + NADP(+) + H(+). In terms of biological role, involved in the regulation of the intracellular balance of NAD and NADP, and is a key enzyme in the biosynthesis of NADP. Catalyzes specifically the phosphorylation on 2'-hydroxyl of the adenosine moiety of NAD to yield NADP. This Lactococcus lactis subsp. cremoris (strain MG1363) protein is NAD kinase.